Here is a 397-residue protein sequence, read N- to C-terminus: Elongation factor Tu (397 aa).

The tr-type G domain maps to 10-206 (KPHVNIGTIG…AVDDNVPEPE (197 aa)). The G1 stretch occupies residues 19–26 (GHVDHGKT). 19–26 (GHVDHGKT) is a GTP binding site. Thr-26 serves as a coordination point for Mg(2+). Residues 62–66 (GITIN) form a G2 region. Positions 83–86 (DAPG) are G3. GTP is bound by residues 83-87 (DAPGH) and 138-141 (NKSD). A G4 region spans residues 138-141 (NKSD). The interval 176-178 (SAL) is G5.

Belongs to the TRAFAC class translation factor GTPase superfamily. Classic translation factor GTPase family. EF-Tu/EF-1A subfamily. In terms of assembly, monomer.

Its subcellular location is the cytoplasm. The enzyme catalyses GTP + H2O = GDP + phosphate + H(+). In terms of biological role, GTP hydrolase that promotes the GTP-dependent binding of aminoacyl-tRNA to the A-site of ribosomes during protein biosynthesis. The protein is Elongation factor Tu of Brevibacterium linens.